Here is an 831-residue protein sequence, read N- to C-terminus: Probable glucan 1,3-beta-glucosidase D (831 aa).

6 stretches are compositionally biased toward basic and acidic residues: residues 1–24 (MPSH…YREV), 44–56 (RRDD…RSHE), 79–93 (RSHD…RSRA), 102–115 (SRRD…EYRR), 137–151 (RDGQ…DREA), and 198–213 (QRER…MESK). Disordered stretches follow at residues 1 to 179 (MPSH…SGSH) and 192 to 241 (HYDE…GQSK). Topologically, residues 1-297 (MPSHSRSRDR…AQPPFWKRKK (297 aa)) are cytoplasmic. Residues 298–318 (WWIVIGVLVVVLAIVIPVAVV) traverse the membrane as a helical; Signal-anchor for type II membrane protein segment. The Extracellular segment spans residues 319-831 (MSKKHGHDDD…PSFGDLPEYY (513 aa)). 7 N-linked (GlcNAc...) asparagine glycosylation sites follow: N376, N381, N393, N410, N442, N546, and N558. E597 functions as the Proton donor in the catalytic mechanism. N-linked (GlcNAc...) asparagine glycosylation is found at N610, N636, N669, and N689. E702 functions as the Nucleophile in the catalytic mechanism.

The protein belongs to the glycosyl hydrolase 5 (cellulase A) family.

It is found in the cell membrane. The catalysed reaction is Successive hydrolysis of beta-D-glucose units from the non-reducing ends of (1-&gt;3)-beta-D-glucans, releasing alpha-glucose.. Functionally, glucosidase involved in the degradation of cellulosic biomass. Active on lichenan. The chain is Probable glucan 1,3-beta-glucosidase D (exgD) from Aspergillus oryzae (strain ATCC 42149 / RIB 40) (Yellow koji mold).